A 104-amino-acid chain; its full sequence is UPF0145 protein STH1265 (104 aa).

The protein belongs to the UPF0145 family.

The chain is UPF0145 protein STH1265 from Symbiobacterium thermophilum (strain DSM 24528 / JCM 14929 / IAM 14863 / T).